The primary structure comprises 223 residues: Endonuclease NucS (223 aa).

It belongs to the NucS endonuclease family.

The protein resides in the cytoplasm. Cleaves both 3' and 5' ssDNA extremities of branched DNA structures. This chain is Endonuclease NucS, found in Mycolicibacterium gilvum (strain PYR-GCK) (Mycobacterium gilvum (strain PYR-GCK)).